Reading from the N-terminus, the 960-residue chain is Glycine dehydrogenase (decarboxylating) (960 aa).

At lysine 709 the chain carries N6-(pyridoxal phosphate)lysine.

This sequence belongs to the GcvP family. The glycine cleavage system is composed of four proteins: P, T, L and H. The cofactor is pyridoxal 5'-phosphate.

It carries out the reaction N(6)-[(R)-lipoyl]-L-lysyl-[glycine-cleavage complex H protein] + glycine + H(+) = N(6)-[(R)-S(8)-aminomethyldihydrolipoyl]-L-lysyl-[glycine-cleavage complex H protein] + CO2. In terms of biological role, the glycine cleavage system catalyzes the degradation of glycine. The P protein binds the alpha-amino group of glycine through its pyridoxal phosphate cofactor; CO(2) is released and the remaining methylamine moiety is then transferred to the lipoamide cofactor of the H protein. The sequence is that of Glycine dehydrogenase (decarboxylating) from Edwardsiella ictaluri (strain 93-146).